The chain runs to 873 residues: Disks large homolog 1 (873 aa).

Positions 4–64 constitute an L27 domain; it reads RQKDAQRALQ…YYEVSLQDTE (61 aa). Residues 62-135 form a disordered region; that stretch reads DTEDKPIEDS…SPHIPGDARP (74 aa). Residues 63–77 show a composition bias toward basic and acidic residues; sequence TEDKPIEDSSLKSRE. Residues 85-96 show a composition bias toward polar residues; sequence WNLSVPPSTTGP. PDZ domains follow at residues 230–317 and 325–412; these read EITL…RRRK and DVKL…AKPT. Positions 441–456 are enriched in polar residues; it reads SYLSQPLTPATPSRYS. Residues 441–464 are disordered; the sequence is SYLSQPLTPATPSRYSPVSKGMLG. Positions 474 to 555 constitute a PDZ 3 domain; sequence KIVLHRGTTG…TVTIIAQYRP (82 aa). Residues 636-662 form a disordered region; that stretch reads NKDSGEQDTSDVDQHVTSNASDSESSF. Positions 650–662 are enriched in polar residues; it reads HVTSNASDSESSF. Residues 683-858 enclose the Guanylate kinase-like domain; that stretch reads SRPVIILGPM…IYNQVKQIIE (176 aa).

The protein belongs to the MAGUK family.

It localises to the cell membrane. Its subcellular location is the endoplasmic reticulum membrane. The protein localises to the cell junction. It is found in the apical cell membrane. Functionally, essential multidomain scaffolding protein required for normal development. Recruits channels, receptors and signaling molecules to discrete plasma membrane domains in polarized cells. Promotes epithelial cell layer barrier function via maintaining cell-cell adhesion. May play a role in adherens junction assembly, signal transduction and cell proliferation. May play a role in synapse assembly and function. This Danio rerio (Zebrafish) protein is Disks large homolog 1 (dlg1).